Here is a 234-residue protein sequence, read N- to C-terminus: uncharacterized protein (234 aa).

This is an uncharacterized protein from Acheta domesticus (House cricket).